Consider the following 66-residue polypeptide: Conotoxin Ca5.2 (66 aa).

Positions 1 to 22 (MRCVPVFLILLGLIASAPSVDA) are cleaved as a signal peptide. Residues 23–48 (RPQTKDDALASFHDSAKRHLQRLVNA) constitute a propeptide that is removed on maturation. F62 is modified (phenylalanine amide).

Belongs to the conotoxin T superfamily. In terms of processing, contains 2 disulfide bonds that can be either 'C1-C3, C2-C4' or 'C1-C4, C2-C3', since these disulfide connectivities have been observed for conotoxins with cysteine framework V (for examples, see AC P0DQQ7 and AC P81755). Expressed by the venom duct.

The protein resides in the secreted. This Conus caracteristicus (Characteristic cone) protein is Conotoxin Ca5.2.